Here is a 333-residue protein sequence, read N- to C-terminus: DNA-directed RNA polymerase subunit alpha (333 aa).

Residues 1 to 234 (MQISVNEFLT…QQLAAFVDLK (234 aa)) are alpha N-terminal domain (alpha-NTD). The segment at 248–333 (IDPILLRPVD…SLKKDDKATA (86 aa)) is alpha C-terminal domain (alpha-CTD).

Belongs to the RNA polymerase alpha chain family. As to quaternary structure, homodimer. The RNAP catalytic core consists of 2 alpha, 1 beta, 1 beta' and 1 omega subunit. When a sigma factor is associated with the core the holoenzyme is formed, which can initiate transcription.

It carries out the reaction RNA(n) + a ribonucleoside 5'-triphosphate = RNA(n+1) + diphosphate. In terms of biological role, DNA-dependent RNA polymerase catalyzes the transcription of DNA into RNA using the four ribonucleoside triphosphates as substrates. The polypeptide is DNA-directed RNA polymerase subunit alpha (Pseudomonas fluorescens (strain Pf0-1)).